Consider the following 163-residue polypeptide: Lipoprotein signal peptidase (163 aa).

3 helical membrane-spanning segments follow: residues 11-31 (ILIA…IATT), 63-83 (KMTF…YFFI), and 88-108 (YNLF…GNFI). Catalysis depends on residues Asp-118 and Asp-136. Residues 131–151 (IFNIADSSLTIGVILIIIALL) traverse the membrane as a helical segment.

This sequence belongs to the peptidase A8 family.

Its subcellular location is the cell membrane. The catalysed reaction is Release of signal peptides from bacterial membrane prolipoproteins. Hydrolyzes -Xaa-Yaa-Zaa-|-(S,diacylglyceryl)Cys-, in which Xaa is hydrophobic (preferably Leu), and Yaa (Ala or Ser) and Zaa (Gly or Ala) have small, neutral side chains.. The protein operates within protein modification; lipoprotein biosynthesis (signal peptide cleavage). Its function is as follows. This protein specifically catalyzes the removal of signal peptides from prolipoproteins. In Staphylococcus aureus (strain Mu3 / ATCC 700698), this protein is Lipoprotein signal peptidase.